The chain runs to 874 residues: Cellulose synthase catalytic subunit [UDP-forming] (874 aa).

4 consecutive transmembrane segments (helical) span residues 30–50, 151–171, 173–193, and 230–250; these read SPFSAALGCLWTILAWIVFPL, ILGVIVTFSLILALICITQPF, PLSQFIFLLLLWGVALLVRRM, and LVCGLILLFAETYAWIVLVLG. The catalytic subdomain A stretch occupies residues 271–364; that stretch reads QWPTVDIFVP…FVAIFDCDHV (94 aa). Residue Asp313 is part of the active site. Residues Asp360 and Asp362 each coordinate substrate. The tract at residues 441-501 is catalytic subdomain B; sequence KPLDEIGGIA…GQRIRWARGM (61 aa). The active site involves Asp457. 5 helical membrane passes run 525–545, 547–567, 592–612, 634–654, and 668–688; these read LNAMFHFLSGIPRLIFLTAPL, FLLLHAYIIYAPALMIALFVI, IYETVLAWYIAPPTLVALINP, VISRPYIFLVLLNLLGVAAGV, and VIVSLVWVFYNLVILGGAVAV. The region spanning 694–790 is the PilZ domain; that stretch reads QVRRAHRVEI…QHIDFVQCTF (97 aa). The chain crosses the membrane as a helical span at residues 833-853; it reads SVKVIFRSLTALIAWIVSFIP.

Belongs to the glycosyltransferase 2 family. Requires Mg(2+) as cofactor.

It is found in the cell inner membrane. The enzyme catalyses [(1-&gt;4)-beta-D-glucosyl](n) + UDP-alpha-D-glucose = [(1-&gt;4)-beta-D-glucosyl](n+1) + UDP + H(+). The protein operates within glycan metabolism; bacterial cellulose biosynthesis. With respect to regulation, activated by bis-(3'-5') cyclic diguanylic acid (c-di-GMP). In terms of biological role, catalytic subunit of cellulose synthase. It polymerizes uridine 5'-diphosphate glucose to cellulose, which is produced as an extracellular component for mechanical and chemical protection at the onset of the stationary phase, when the cells exhibit multicellular behavior (rdar morphotype). Coexpression of cellulose and thin aggregative fimbriae leads to a hydrophobic network with tightly packed cells embedded in a highly inert matrix. In Salmonella typhi, this protein is Cellulose synthase catalytic subunit [UDP-forming] (bcsA).